Here is a 320-residue protein sequence, read N- to C-terminus: o-succinylbenzoate synthase (320 aa).

Lysine 133 acts as the Proton donor in catalysis. Residues aspartate 161, glutamate 190, and aspartate 213 each coordinate Mg(2+). Lysine 235 serves as the catalytic Proton acceptor.

Belongs to the mandelate racemase/muconate lactonizing enzyme family. MenC type 1 subfamily. It depends on a divalent metal cation as a cofactor.

It carries out the reaction (1R,6R)-6-hydroxy-2-succinyl-cyclohexa-2,4-diene-1-carboxylate = 2-succinylbenzoate + H2O. It functions in the pathway quinol/quinone metabolism; 1,4-dihydroxy-2-naphthoate biosynthesis; 1,4-dihydroxy-2-naphthoate from chorismate: step 4/7. It participates in quinol/quinone metabolism; menaquinone biosynthesis. Its function is as follows. Converts 2-succinyl-6-hydroxy-2,4-cyclohexadiene-1-carboxylate (SHCHC) to 2-succinylbenzoate (OSB). This Shigella boydii serotype 4 (strain Sb227) protein is o-succinylbenzoate synthase.